The following is a 96-amino-acid chain: Neutrophil defensin 3 (96 aa).

Positions 1–19 are cleaved as a signal peptide; that stretch reads MRTLVILAAILLVALQAQA. Residues 20 to 66 constitute a propeptide that is removed on maturation; that stretch reads EPLQARTDEATAAQEQIPTDNPEVVVSLAWDESLAPKDSVPGLRKNM. Intrachain disulfides connect cysteine 68/cysteine 96, cysteine 70/cysteine 85, and cysteine 75/cysteine 95.

The protein resides in the secreted. Its function is as follows. Has bacteriostatic activity against Gram-positive bacteria S.aureus and L.monocytogenes and Gram-negative bacterium E.coli and antifungal activity against C.neoformans. This is Neutrophil defensin 3 from Macaca mulatta (Rhesus macaque).